Reading from the N-terminus, the 108-residue chain is Nucleoid-associated protein Mmwyl1_2533 (108 aa).

Residues 1-22 form a disordered region; sequence MFKGGMGNMMRQAQQMQENMQK. Over residues 11–22 the composition is skewed to polar residues; the sequence is RQAQQMQENMQK.

It belongs to the YbaB/EbfC family. Homodimer.

It localises to the cytoplasm. The protein localises to the nucleoid. Its function is as follows. Binds to DNA and alters its conformation. May be involved in regulation of gene expression, nucleoid organization and DNA protection. In Marinomonas sp. (strain MWYL1), this protein is Nucleoid-associated protein Mmwyl1_2533.